The chain runs to 942 residues: Protein NLP1 (942 aa).

Positions 1-11 (MEQKPSPPPPP) are enriched in pro residues. Disordered regions lie at residues 1-32 (MEQKPSPPPPPRSDEEEDGLMGCGMGGTGDIA), 77-106 (TTPAPAAGEDDRDEAEMPSRGGGGLEVSPA), 594-620 (VKENTCSSDPSNSNSDKAVEKRRTKTE), 723-753 (FQLEPSVPDRPCEGRFTSHTSGSNSISPSCS), and 759-778 (SLGCSSVPKTQQQHGSAPQL). Gly residues predominate over residues 21–32 (MGCGMGGTGDIA). Residues 597–609 (NTCSSDPSNSNSD) show a composition bias toward polar residues. Positions 609-690 (DKAVEKRRTK…IDSVHGPEGT (82 aa)) constitute an RWP-RK domain. The segment covering 743–753 (SGSNSISPSCS) has biased composition (low complexity). Residues 765–774 (VPKTQQQHGS) are compositionally biased toward polar residues. Positions 844–927 (SLKIKAIYGE…QTVRILVNPS (84 aa)) constitute a PB1 domain.

It is found in the nucleus. Probable transcription factor. The polypeptide is Protein NLP1 (NLP1) (Oryza sativa subsp. japonica (Rice)).